A 76-amino-acid polypeptide reads, in one-letter code: UPF0291 protein BCE_1981 (76 aa).

Belongs to the UPF0291 family.

The protein resides in the cytoplasm. The polypeptide is UPF0291 protein BCE_1981 (Bacillus cereus (strain ATCC 10987 / NRS 248)).